The following is a 548-amino-acid chain: Fluconazole resistance protein 1 (548 aa).

Residues 30–94 (SAREDETRKP…WNGPSDPENP (65 aa)) form a disordered region. Residues 31–51 (AREDETRKPENTDKKECKPDY) are compositionally biased toward basic and acidic residues. Over residues 60 to 73 (SCSESSTDSDSSGS) the composition is skewed to low complexity. The next 12 helical transmembrane spans lie at 104–124 (LVVFQIMLLTCVTYMGSSIYT), 139–159 (VVATLNLSLYVLGYGLGPIIF), 179–199 (FFFMIFQVGCATVHNIGGLIV), 203–223 (ISGILCSPSLATGGGTVADII), 230–250 (LVLGMWSAGAVAAPVLAPLLG), 261–281 (FIFWLLMWLSAATFILLAFFF), 347–367 (IAVAYGCFYLFFEAFPIVFVG), 376–396 (VGLAYMGFCVGCVLAYGLFGI), 416–436 (FLIVAMCVCWCLPLSLFLFGW), 440–460 (VHWILPVISEVFFVLAVFNIF), 476–496 (ASVFAGNGFCRASFACAFPLF), and 511–531 (VAWGSSLVGFLTLGLAIIPFI).

The protein belongs to the major facilitator superfamily.

The protein resides in the membrane. Probable efflux transporter. Confers resistance to the azole derivative fluconazole (FCZ). This Saccharomyces cerevisiae (strain ATCC 204508 / S288c) (Baker's yeast) protein is Fluconazole resistance protein 1 (FLR1).